The chain runs to 353 residues: MSEILHIQTATSNYPIHIGILPHIEYAHKVLLVSNPKVAGLHLKYVLERIKAPEVYVCIVPDGEQYKDMKSIEYILECAFTHRLDRKSLMIALGGGVIGDMVGFASGIYQRGIDFIQIPTTLLAQVDASVGGKTGINNTFGKNLIGLFHQPKAVYIDPFMLSTLPKREFGAGVAEIIKMAVCFDEAFFILLQEQILSINDNDFLTRAIAKSVAIKAQVVNADEKEQGIRAALNYGHTFGHIIENLTQYSQFLHGEAVSIGMCMANALSCKLGLLTKEQKDAISALLERYDLPTHFYIQNALDFYEKFSLDKKSVNAKIMFVLPCGIGNVSLRNDVPKADVLDVLSSFSKDSGK.

Residues 62-67, 96-100, 120-121, K133, and K142 each bind NAD(+); these read DGEQYK, GVIGD, and TT. Zn(2+)-binding residues include E175, H236, and H253.

Belongs to the sugar phosphate cyclases superfamily. Dehydroquinate synthase family. The cofactor is NAD(+). Co(2+) serves as cofactor. Requires Zn(2+) as cofactor.

It is found in the cytoplasm. It carries out the reaction 7-phospho-2-dehydro-3-deoxy-D-arabino-heptonate = 3-dehydroquinate + phosphate. The protein operates within metabolic intermediate biosynthesis; chorismate biosynthesis; chorismate from D-erythrose 4-phosphate and phosphoenolpyruvate: step 2/7. In terms of biological role, catalyzes the conversion of 3-deoxy-D-arabino-heptulosonate 7-phosphate (DAHP) to dehydroquinate (DHQ). The protein is 3-dehydroquinate synthase of Helicobacter hepaticus (strain ATCC 51449 / 3B1).